The primary structure comprises 578 residues: DNA mismatch repair protein MutL (578 aa).

It belongs to the DNA mismatch repair MutL/HexB family.

Functionally, this protein is involved in the repair of mismatches in DNA. It is required for dam-dependent methyl-directed DNA mismatch repair. May act as a 'molecular matchmaker', a protein that promotes the formation of a stable complex between two or more DNA-binding proteins in an ATP-dependent manner without itself being part of a final effector complex. This Carboxydothermus hydrogenoformans (strain ATCC BAA-161 / DSM 6008 / Z-2901) protein is DNA mismatch repair protein MutL.